A 274-amino-acid chain; its full sequence is NH(3)-dependent NAD(+) synthetase (274 aa).

46-53 serves as a coordination point for ATP; sequence GISGGQDS. A Mg(2+)-binding site is contributed by Asp-52. Arg-140 is a deamido-NAD(+) binding site. Thr-160 contributes to the ATP binding site. Glu-165 lines the Mg(2+) pocket. Deamido-NAD(+) contacts are provided by Lys-173 and Asp-180. Residues Lys-189 and Thr-211 each coordinate ATP. 260–261 is a deamido-NAD(+) binding site; the sequence is HK.

It belongs to the NAD synthetase family. In terms of assembly, homodimer.

The enzyme catalyses deamido-NAD(+) + NH4(+) + ATP = AMP + diphosphate + NAD(+) + H(+). Its pathway is cofactor biosynthesis; NAD(+) biosynthesis; NAD(+) from deamido-NAD(+) (ammonia route): step 1/1. Its function is as follows. Catalyzes the ATP-dependent amidation of deamido-NAD to form NAD. Uses ammonia as a nitrogen source. The polypeptide is NH(3)-dependent NAD(+) synthetase (Streptococcus pneumoniae (strain Hungary19A-6)).